Consider the following 704-residue polypeptide: Polyribonucleotide nucleotidyltransferase (704 aa).

Mg(2+) contacts are provided by Asp-485 and Asp-491. In terms of domain architecture, KH spans 552-611 (PKTETIQIDPDKIRSVIGAGGKVINKIIQDTGVKIDIKEDGSVFVSSSDHAGVKEAIKII). Residues 621 to 689 (GEIYLGKVTK…SQGRINLSRK (69 aa)) form the S1 motif domain.

This sequence belongs to the polyribonucleotide nucleotidyltransferase family. Requires Mg(2+) as cofactor.

It is found in the cytoplasm. The enzyme catalyses RNA(n+1) + phosphate = RNA(n) + a ribonucleoside 5'-diphosphate. Involved in mRNA degradation. Catalyzes the phosphorolysis of single-stranded polyribonucleotides processively in the 3'- to 5'-direction. The polypeptide is Polyribonucleotide nucleotidyltransferase (Clostridium botulinum (strain Eklund 17B / Type B)).